Here is a 677-residue protein sequence, read N- to C-terminus: Nuclear fusion protein FUS2 (677 aa).

At Thr20 the chain carries Phosphothreonine. A phosphoserine mark is found at Ser67, Ser72, and Ser84. Thr88 bears the Phosphothreonine mark. 2 positions are modified to phosphoserine: Ser100 and Ser106. Residues 112-326 (KFYKIVQEFY…KYSLFSNKLE (215 aa)) form the DH domain.

Its subcellular location is the cell tip. Functionally, promotes cell fusion during zygote formation. The sequence is that of Nuclear fusion protein FUS2 (FUS2) from Saccharomyces cerevisiae (strain ATCC 204508 / S288c) (Baker's yeast).